A 269-amino-acid polypeptide reads, in one-letter code: Undecaprenyl-diphosphatase (269 aa).

6 helical membrane passes run 43–63, 82–102, 108–128, 188–208, 222–242, and 249–269; these read KGKV…CWEY, FILN…LLHG, LFSS…ILLV, ATEF…FYDV, MFAV…KTLI, and DFKG…AYYW.

This sequence belongs to the UppP family.

It localises to the cell inner membrane. It catalyses the reaction di-trans,octa-cis-undecaprenyl diphosphate + H2O = di-trans,octa-cis-undecaprenyl phosphate + phosphate + H(+). In terms of biological role, catalyzes the dephosphorylation of undecaprenyl diphosphate (UPP). Confers resistance to bacitracin. The sequence is that of Undecaprenyl-diphosphatase from Methylobacillus flagellatus (strain ATCC 51484 / DSM 6875 / VKM B-1610 / KT).